Here is a 178-residue protein sequence, read N- to C-terminus: 2-C-methyl-D-erythritol 2,4-cyclodiphosphate synthase (178 aa).

A divalent metal cation is bound by residues D24, H26, and H61. A 4-CDP-2-C-methyl-D-erythritol 2-phosphate-binding site is contributed by 24 to 26 (DSH). 4-CDP-2-C-methyl-D-erythritol 2-phosphate is bound at residue 150-153 (TSGE).

This sequence belongs to the IspF family. As to quaternary structure, homotrimer. It depends on a divalent metal cation as a cofactor.

It catalyses the reaction 4-CDP-2-C-methyl-D-erythritol 2-phosphate = 2-C-methyl-D-erythritol 2,4-cyclic diphosphate + CMP. It participates in isoprenoid biosynthesis; isopentenyl diphosphate biosynthesis via DXP pathway; isopentenyl diphosphate from 1-deoxy-D-xylulose 5-phosphate: step 4/6. Its function is as follows. Involved in the biosynthesis of isopentenyl diphosphate (IPP) and dimethylallyl diphosphate (DMAPP), two major building blocks of isoprenoid compounds. Catalyzes the conversion of 4-diphosphocytidyl-2-C-methyl-D-erythritol 2-phosphate (CDP-ME2P) to 2-C-methyl-D-erythritol 2,4-cyclodiphosphate (ME-CPP) with a corresponding release of cytidine 5-monophosphate (CMP). The chain is 2-C-methyl-D-erythritol 2,4-cyclodiphosphate synthase from Chlamydia muridarum (strain MoPn / Nigg).